Here is a 422-residue protein sequence, read N- to C-terminus: MKYYCETKSATDLTRKTLALVLAGGEGSRLKDLTKWRAKPAVPFGGKYRIIDFVLSNCVNSGIRKIGVLTQYKSHSLIRHVQRAWSFMRYEVGEFVELLPAQQRVDKGWYKGTADALYQNLDIMRRHTPDYVLVLGGDHIYSMDYSKMLYEHAESGADVTIGCIEVPRMEATGFGVMSVDECFKITKFTEKPANPDAMPHKPDKALASMGIYVFSTEFLFQKLIEDADNPNSSRDFGKDIIPSIIEDWQVRAFPFEDETGLPVYWRDVGTIESYWKASLDLCSITPDLNLYDEDWPIWTYQAQMPPAKFIFDDEGRRGEAIDSLVAGGCIISGARIKRSVISSGGHVHSFCLVKDSVLLPRVKVERNCRIQNAVIDKGCVIPEGTVIGEDLEADRKRFYVEEASGIVLVTPDMLGQRLHITR.

Alpha-D-glucose 1-phosphate is bound by residues Y110, G175, 190–191 (EK), and S208.

Belongs to the bacterial/plant glucose-1-phosphate adenylyltransferase family. As to quaternary structure, homotetramer.

It carries out the reaction alpha-D-glucose 1-phosphate + ATP + H(+) = ADP-alpha-D-glucose + diphosphate. It participates in glycan biosynthesis; glycogen biosynthesis. Involved in the biosynthesis of ADP-glucose, a building block required for the elongation reactions to produce glycogen. Catalyzes the reaction between ATP and alpha-D-glucose 1-phosphate (G1P) to produce pyrophosphate and ADP-Glc. This Hydrogenovibrio crunogenus (strain DSM 25203 / XCL-2) (Thiomicrospira crunogena) protein is Glucose-1-phosphate adenylyltransferase.